The following is a 92-amino-acid chain: Small ribosomal subunit protein uS19 (92 aa).

It belongs to the universal ribosomal protein uS19 family.

Its function is as follows. Protein S19 forms a complex with S13 that binds strongly to the 16S ribosomal RNA. This chain is Small ribosomal subunit protein uS19, found in Paracidovorax citrulli (strain AAC00-1) (Acidovorax citrulli).